The following is a 165-amino-acid chain: Small ribosomal subunit protein uS5 (165 aa).

Positions 10 to 73 (LNEKLIAVNR…EKARRNMVTV (64 aa)) constitute an S5 DRBM domain.

This sequence belongs to the universal ribosomal protein uS5 family. In terms of assembly, part of the 30S ribosomal subunit. Contacts proteins S4 and S8.

Its function is as follows. With S4 and S12 plays an important role in translational accuracy. Located at the back of the 30S subunit body where it stabilizes the conformation of the head with respect to the body. This Photobacterium profundum (strain SS9) protein is Small ribosomal subunit protein uS5.